The primary structure comprises 159 residues: Small ribosomal subunit protein uS7 (159 aa).

Belongs to the universal ribosomal protein uS7 family. As to quaternary structure, part of the 30S ribosomal subunit. Contacts proteins S9 and S11.

Functionally, one of the primary rRNA binding proteins, it binds directly to 16S rRNA where it nucleates assembly of the head domain of the 30S subunit. Is located at the subunit interface close to the decoding center, probably blocks exit of the E-site tRNA. This is Small ribosomal subunit protein uS7 from Wolbachia sp. subsp. Brugia malayi (strain TRS).